A 224-amino-acid chain; its full sequence is ATP-dependent dethiobiotin synthetase BioD (224 aa).

T18 serves as a coordination point for Mg(2+). K39 is a catalytic residue. Substrate is bound at residue S43. Mg(2+) contacts are provided by D56 and E117. ATP contacts are provided by residues D56, 117 to 120, and 177 to 178; these read EGVG and NE.

The protein belongs to the dethiobiotin synthetase family. As to quaternary structure, homodimer. Mg(2+) is required as a cofactor.

The protein localises to the cytoplasm. The catalysed reaction is (7R,8S)-7,8-diammoniononanoate + CO2 + ATP = (4R,5S)-dethiobiotin + ADP + phosphate + 3 H(+). The protein operates within cofactor biosynthesis; biotin biosynthesis; biotin from 7,8-diaminononanoate: step 1/2. In terms of biological role, catalyzes a mechanistically unusual reaction, the ATP-dependent insertion of CO2 between the N7 and N8 nitrogen atoms of 7,8-diaminopelargonic acid (DAPA, also called 7,8-diammoniononanoate) to form a ureido ring. The sequence is that of ATP-dependent dethiobiotin synthetase BioD from Xanthomonas axonopodis pv. citri (strain 306).